The primary structure comprises 264 residues: Triosephosphate isomerase (264 aa).

Position 13 to 15 (13 to 15 (NWK)) interacts with substrate. H98 functions as the Electrophile in the catalytic mechanism. The active-site Proton acceptor is E170. Substrate-binding positions include G176, S216, and 237–238 (GG).

Belongs to the triosephosphate isomerase family. Homodimer.

It is found in the cytoplasm. It carries out the reaction D-glyceraldehyde 3-phosphate = dihydroxyacetone phosphate. The protein operates within carbohydrate biosynthesis; gluconeogenesis. It participates in carbohydrate degradation; glycolysis; D-glyceraldehyde 3-phosphate from glycerone phosphate: step 1/1. Its function is as follows. Involved in the gluconeogenesis. Catalyzes stereospecifically the conversion of dihydroxyacetone phosphate (DHAP) to D-glyceraldehyde-3-phosphate (G3P). This chain is Triosephosphate isomerase, found in Protochlamydia amoebophila (strain UWE25).